Consider the following 243-residue polypeptide: Chromosome partition protein MukE (243 aa).

Residues L223–E243 form a disordered region. A compositionally biased stretch (acidic residues) spans E233–E243.

Belongs to the MukE family. In terms of assembly, interacts, and probably forms a ternary complex, with MukF and MukB. The complex formation is stimulated by calcium or magnesium.

Its subcellular location is the cytoplasm. The protein resides in the nucleoid. Involved in chromosome condensation, segregation and cell cycle progression. May participate in facilitating chromosome segregation by condensation DNA from both sides of a centrally located replisome during cell division. Probably acts via its interaction with MukB and MukF. This Haemophilus influenzae (strain ATCC 51907 / DSM 11121 / KW20 / Rd) protein is Chromosome partition protein MukE.